Reading from the N-terminus, the 182-residue chain is UPF0215 protein Pcal_0119 (182 aa).

This sequence belongs to the UPF0215 family.

The sequence is that of UPF0215 protein Pcal_0119 from Pyrobaculum calidifontis (strain DSM 21063 / JCM 11548 / VA1).